The following is a 1333-amino-acid chain: Xanthine dehydrogenase/oxidase (1333 aa).

Residues 4-91 (DKLVFFVNGR…HVAVTTVEGI (88 aa)) enclose the 2Fe-2S ferredoxin-type domain. [2Fe-2S] cluster is bound by residues Cys-43, Cys-48, Cys-51, Cys-73, Cys-113, Cys-116, Cys-148, and Cys-150. The 186-residue stretch at 229-414 (FEGERVTWIQ…LSIEIPYSRE (186 aa)) folds into the FAD-binding PCMH-type domain. Residues 257-264 (LVVGNTEI), Phe-337, 347-351 (SVGGN), Asp-360, Leu-404, and Lys-422 each bind FAD. Cystine bridges form between Cys-509/Cys-1318 and Cys-536/Cys-993. Gln-768 and Phe-799 together coordinate Mo-molybdopterin. Substrate-binding residues include Glu-803 and Arg-881. A Mo-molybdopterin-binding site is contributed by Arg-913. Substrate contacts are provided by Phe-915 and Thr-1011. Ala-1080 contacts Mo-molybdopterin. Residue Glu-1262 is the Proton acceptor of the active site.

The protein belongs to the xanthine dehydrogenase family. As to quaternary structure, homodimer. Interacts with BTN1A1. It depends on [2Fe-2S] cluster as a cofactor. The cofactor is FAD. Requires Mo-molybdopterin as cofactor. Post-translationally, subject to partial proteolysis; this alters the enzyme from the dehydrogenase form (D) to the oxidase form (O). Contains sulfhydryl groups that are easily oxidized (in vitro); this alters the enzyme from the dehydrogenase form (D) to the oxidase form (O). In terms of tissue distribution, detected in milk (at protein level).

Its subcellular location is the cytoplasm. It localises to the peroxisome. It is found in the secreted. The enzyme catalyses xanthine + NAD(+) + H2O = urate + NADH + H(+). The catalysed reaction is hypoxanthine + NAD(+) + H2O = xanthine + NADH + H(+). It carries out the reaction xanthine + O2 + H2O = urate + H2O2. Its activity is regulated as follows. Can be converted from the dehydrogenase form (D) to the oxidase form (O) irreversibly by proteolysis or reversibly through the oxidation of sulfhydryl groups. Key enzyme in purine degradation. Catalyzes the oxidation of hypoxanthine to xanthine. Catalyzes the oxidation of xanthine to uric acid. Contributes to the generation of reactive oxygen species. Has also low oxidase activity towards aldehydes (in vitro). This is Xanthine dehydrogenase/oxidase (XDH) from Homo sapiens (Human).